Reading from the N-terminus, the 391-residue chain is Formate-dependent phosphoribosylglycinamide formyltransferase (391 aa).

N(1)-(5-phospho-beta-D-ribosyl)glycinamide is bound by residues 18-19 (EL) and E78. Residues R110, K151, 156–161 (SSGKGQ), 191–194 (EEFI), and E199 each bind ATP. The ATP-grasp domain occupies 115 to 305 (ELAHEELGIR…EFELHLRAIL (191 aa)). 2 residues coordinate Mg(2+): E264 and E276. N(1)-(5-phospho-beta-D-ribosyl)glycinamide-binding positions include D283, K353, and 360–361 (RR).

Belongs to the PurK/PurT family. In terms of assembly, homodimer.

The catalysed reaction is N(1)-(5-phospho-beta-D-ribosyl)glycinamide + formate + ATP = N(2)-formyl-N(1)-(5-phospho-beta-D-ribosyl)glycinamide + ADP + phosphate + H(+). The protein operates within purine metabolism; IMP biosynthesis via de novo pathway; N(2)-formyl-N(1)-(5-phospho-D-ribosyl)glycinamide from N(1)-(5-phospho-D-ribosyl)glycinamide (formate route): step 1/1. Its function is as follows. Involved in the de novo purine biosynthesis. Catalyzes the transfer of formate to 5-phospho-ribosyl-glycinamide (GAR), producing 5-phospho-ribosyl-N-formylglycinamide (FGAR). Formate is provided by PurU via hydrolysis of 10-formyl-tetrahydrofolate. This is Formate-dependent phosphoribosylglycinamide formyltransferase from Trichormus variabilis (strain ATCC 29413 / PCC 7937) (Anabaena variabilis).